The primary structure comprises 170 residues: MLQPHLVIGSAFTFGDAFFTLFAFAILLVLIRIYAWKPLMGVMKEREEHIGSEIDAAEESRAQAEQLLAEQKSVLQQARVESQTMIENAKQLGEKEREEIVKTARRESERIKEEAKADIAREKEDAISALREQVGSLSVLIASKVIEKNLDEKEQSNLIQDYIERLGDDK.

A helical membrane pass occupies residues 11–31 (AFTFGDAFFTLFAFAILLVLI).

Belongs to the ATPase B chain family. As to quaternary structure, F-type ATPases have 2 components, F(1) - the catalytic core - and F(0) - the membrane proton channel. F(1) has five subunits: alpha(3), beta(3), gamma(1), delta(1), epsilon(1). F(0) has three main subunits: a(1), b(2) and c(10-14). The alpha and beta chains form an alternating ring which encloses part of the gamma chain. F(1) is attached to F(0) by a central stalk formed by the gamma and epsilon chains, while a peripheral stalk is formed by the delta and b chains.

It is found in the cell membrane. F(1)F(0) ATP synthase produces ATP from ADP in the presence of a proton or sodium gradient. F-type ATPases consist of two structural domains, F(1) containing the extramembraneous catalytic core and F(0) containing the membrane proton channel, linked together by a central stalk and a peripheral stalk. During catalysis, ATP synthesis in the catalytic domain of F(1) is coupled via a rotary mechanism of the central stalk subunits to proton translocation. In terms of biological role, component of the F(0) channel, it forms part of the peripheral stalk, linking F(1) to F(0). In Listeria innocua serovar 6a (strain ATCC BAA-680 / CLIP 11262), this protein is ATP synthase subunit b.